Here is a 342-residue protein sequence, read N- to C-terminus: ATPase asna-1 (342 aa).

ATP is bound at residue 26–33 (KGGVGKTT). The active site involves D55. ATP is bound by residues E243 and N270. Residues C285 and C288 each coordinate Zn(2+).

Belongs to the arsA ATPase family. As to quaternary structure, homodimer.

Its subcellular location is the cytoplasm. It is found in the endoplasmic reticulum. Its function is as follows. ATPase required for the post-translational delivery of tail-anchored (TA) proteins to the endoplasmic reticulum. Recognizes and selectively binds the transmembrane domain of TA proteins in the cytosol. This complex then targets to the endoplasmic reticulum by membrane-bound receptors, where the tail-anchored protein is released for insertion. This process is regulated by ATP binding and hydrolysis. ATP binding drives the homodimer towards the closed dimer state, facilitating recognition of newly synthesized TA membrane proteins. ATP hydrolysis is required for insertion. Subsequently, the homodimer reverts towards the open dimer state, lowering its affinity for the membrane-bound receptor, and returning it to the cytosol to initiate a new round of targeting. May be involved in insulin signaling. In Caenorhabditis elegans, this protein is ATPase asna-1.